Here is a 1244-residue protein sequence, read N- to C-terminus: Protein MMS22-like (1244 aa).

It belongs to the MMS22 family. MMS22L subfamily. As to quaternary structure, component of the MMS22L-TONSL complex, a complex at least composed of MMS22L and TONSL/NFKBIL2. Interacts with RAD51; interaction is direct. Post-translationally, degraded by the ubiquitin-proteasome system upon replication stress.

It is found in the nucleus. It localises to the chromosome. Functionally, component of the MMS22L-TONSL complex, a complex that promotes homologous recombination-mediated repair of double-strand breaks (DSBs) at stalled or collapsed replication forks. The MMS22L-TONSL complex is required to maintain genome integrity during DNA replication. It mediates the assembly of RAD51 filaments on single-stranded DNA (ssDNA): the MMS22L-TONSL complex is recruited to DSBs following histone replacement by histone chaperones and eviction of the replication protein A complex (RPA/RP-A) from DSBs. Following recruitment to DSBs, the TONSL-MMS22L complex promotes recruitment of RAD51 filaments and subsequent homologous recombination. Within the complex, MMS22L acts by binding ssDNA. The chain is Protein MMS22-like (MMS22L) from Bos taurus (Bovine).